Here is an 87-residue protein sequence, read N- to C-terminus: Large ribosomal subunit protein bL31B (87 aa).

It belongs to the bacterial ribosomal protein bL31 family. Type B subfamily. In terms of assembly, part of the 50S ribosomal subunit.

The chain is Large ribosomal subunit protein bL31B from Escherichia coli O9:H4 (strain HS).